Consider the following 233-residue polypeptide: Uracil-DNA glycosylase (233 aa).

The Proton acceptor role is filled by D70.

It belongs to the uracil-DNA glycosylase (UDG) superfamily. UNG family.

Its subcellular location is the cytoplasm. It carries out the reaction Hydrolyzes single-stranded DNA or mismatched double-stranded DNA and polynucleotides, releasing free uracil.. In terms of biological role, excises uracil residues from the DNA which can arise as a result of misincorporation of dUMP residues by DNA polymerase or due to deamination of cytosine. The chain is Uracil-DNA glycosylase from Helicobacter pylori (strain HPAG1).